A 267-amino-acid polypeptide reads, in one-letter code: Protein I267L (267 aa).

This sequence belongs to the asfivirus I267L family.

In Ornithodoros (relapsing fever ticks), this protein is Protein I267L.